We begin with the raw amino-acid sequence, 292 residues long: uncharacterized protein (292 aa).

This sequence belongs to the glycosyltransferase 2 family. WaaE/KdtX subfamily.

This is an uncharacterized protein from Rickettsia typhi (strain ATCC VR-144 / Wilmington).